We begin with the raw amino-acid sequence, 214 residues long: Ion-translocating oxidoreductase complex subunit G (214 aa).

The helical transmembrane segment at alanine 13 to phenylalanine 33 threads the bilayer. Residue threonine 180 is modified to FMN phosphoryl threonine.

Belongs to the RnfG family. In terms of assembly, the complex is composed of six subunits: RnfA, RnfB, RnfC, RnfD, RnfE and RnfG. The cofactor is FMN.

It localises to the cell inner membrane. In terms of biological role, part of a membrane-bound complex that couples electron transfer with translocation of ions across the membrane. This is Ion-translocating oxidoreductase complex subunit G from Pseudomonas aeruginosa (strain UCBPP-PA14).